We begin with the raw amino-acid sequence, 91 residues long: Small ribosomal subunit protein bS20 (91 aa).

The interval 1–28 (MPNIKSAIKRTKTIEKRRAHRASQKSDL) is disordered. The segment covering 7–23 (AIKRTKTIEKRRAHRAS) has biased composition (basic residues).

It belongs to the bacterial ribosomal protein bS20 family.

Binds directly to 16S ribosomal RNA. The polypeptide is Small ribosomal subunit protein bS20 (Brevibacillus brevis (strain 47 / JCM 6285 / NBRC 100599)).